Reading from the N-terminus, the 296-residue chain is 4-hydroxy-tetrahydrodipicolinate synthase (296 aa).

Thr-45 lines the pyruvate pocket. The active-site Proton donor/acceptor is Tyr-133. The active-site Schiff-base intermediate with substrate is the Lys-161. Pyruvate is bound at residue Ile-203.

It belongs to the DapA family. Homotetramer; dimer of dimers.

The protein resides in the cytoplasm. The enzyme catalyses L-aspartate 4-semialdehyde + pyruvate = (2S,4S)-4-hydroxy-2,3,4,5-tetrahydrodipicolinate + H2O + H(+). It functions in the pathway amino-acid biosynthesis; L-lysine biosynthesis via DAP pathway; (S)-tetrahydrodipicolinate from L-aspartate: step 3/4. In terms of biological role, catalyzes the condensation of (S)-aspartate-beta-semialdehyde [(S)-ASA] and pyruvate to 4-hydroxy-tetrahydrodipicolinate (HTPA). This Idiomarina loihiensis (strain ATCC BAA-735 / DSM 15497 / L2-TR) protein is 4-hydroxy-tetrahydrodipicolinate synthase.